A 321-amino-acid polypeptide reads, in one-letter code: MKDNTVPLKLIALLANGEFHSGEQLGETLGMSRAAINKHIQTLRDWGVDVFTVPGKGYSLPEPIQLLNAKQILGQLDGGSVAVLPVIDSTNQYLLDRIGELKSGDACIAEYQQAGRGRRGRKWFSPFGANLYLSMFWRLEQGPAAAIGLSLVIGIVMAEVLRKLGADKVRVKWPNDLYLQDRKLAGILVELTGKTGDAAQIVIGAGINMAMRRVEESVVNQGWITLQEAGINLDRNTLAAMLIRELRAALELFEQEGLAPYLSRWEKLDNFINRPVKLIIGDKEIFGISRGIDKQGALLLEQDGIIKPWMGGEISLRSAEK.

Positions 22–41 form a DNA-binding region, H-T-H motif; that stretch reads GEQLGETLGMSRAAINKHIQ. Residues 67–254 form the BPL/LPL catalytic domain; sequence LNAKQILGQL…ELRAALELFE (188 aa). Biotin contacts are provided by residues 89–91, Gln-112, 116–118, and Lys-183; these read STN and RGR.

The protein belongs to the biotin--protein ligase family. Monomer in solution. Interacts with BCCP. Homodimerizes to bind DNA. Interaction with the corepressor bio-5'-AMP increases dimerization.

It carries out the reaction biotin + L-lysyl-[protein] + ATP = N(6)-biotinyl-L-lysyl-[protein] + AMP + diphosphate + H(+). With respect to regulation, the switch between the enzymatic activity and the repressor activity is regulated by cellular demand for biotin. The switch occurs by swapping of protein interaction partners by holoBirA. In conditions of high biotin demand, holoBirA associates with apoBCCP to transfer biotin. In conditions of low biotin demand, holoBirA dimerizes, binds DNA and represses transcription of the biotin operon. Functionally, acts both as a biotin--[acetyl-CoA-carboxylase] ligase and a biotin-operon repressor. In the presence of ATP, BirA activates biotin to form the BirA-biotinyl-5'-adenylate (BirA-bio-5'-AMP or holoBirA) complex. HoloBirA can either transfer the biotinyl moiety to the biotin carboxyl carrier protein (BCCP) subunit of acetyl-CoA carboxylase, or bind to the biotin operator site and inhibit transcription of the operon. This chain is Bifunctional ligase/repressor BirA, found in Escherichia coli (strain K12).